Reading from the N-terminus, the 423-residue chain is Gamma-glutamyl phosphate reductase (423 aa).

This sequence belongs to the gamma-glutamyl phosphate reductase family.

It localises to the cytoplasm. It carries out the reaction L-glutamate 5-semialdehyde + phosphate + NADP(+) = L-glutamyl 5-phosphate + NADPH + H(+). The protein operates within amino-acid biosynthesis; L-proline biosynthesis; L-glutamate 5-semialdehyde from L-glutamate: step 2/2. Catalyzes the NADPH-dependent reduction of L-glutamate 5-phosphate into L-glutamate 5-semialdehyde and phosphate. The product spontaneously undergoes cyclization to form 1-pyrroline-5-carboxylate. The chain is Gamma-glutamyl phosphate reductase from Pseudomonas entomophila (strain L48).